We begin with the raw amino-acid sequence, 427 residues long: Phosphoribosylamine--glycine ligase (427 aa).

An ATP-grasp domain is found at 109 to 313; sequence RNLMAEYKIE…LAEVVTGITE (205 aa). Residue 136-191 coordinates ATP; the sequence is VRDHDGDLAVKPIGLTGGKGVRIMGEQVDRAGAIEYIREINGGVVLEERLTGEEFT. 3 residues coordinate Mg(2+): Gln-271, Glu-283, and Asn-285. Positions 271, 283, and 285 each coordinate Mn(2+).

This sequence belongs to the GARS family. Mg(2+) is required as a cofactor. Requires Mn(2+) as cofactor.

The catalysed reaction is 5-phospho-beta-D-ribosylamine + glycine + ATP = N(1)-(5-phospho-beta-D-ribosyl)glycinamide + ADP + phosphate + H(+). Its pathway is purine metabolism; IMP biosynthesis via de novo pathway; N(1)-(5-phospho-D-ribosyl)glycinamide from 5-phospho-alpha-D-ribose 1-diphosphate: step 2/2. The polypeptide is Phosphoribosylamine--glycine ligase (Methanoregula boonei (strain DSM 21154 / JCM 14090 / 6A8)).